A 492-amino-acid chain; its full sequence is uncharacterized protein (492 aa).

The next 12 membrane-spanning stretches (helical) occupy residues 13–33, 42–62, 97–117, 150–170, 180–200, 222–242, 258–278, 320–340, 359–379, 391–411, 428–448, and 463–483; these read LGFI…WRFG, GAFL…LMIL, FIIT…LIIL, GILV…SAGI, IMIP…LTLP, VWLS…GILI, AVTV…AVFG, FGIV…VSIV, LLAV…GAGL, GYLL…LFGG, VWWK…VVFL, and TTYV…SVIL.

The protein belongs to the sodium:neurotransmitter symporter (SNF) (TC 2.A.22) family.

The protein localises to the cell membrane. Functionally, putative sodium-dependent transporter. This is an uncharacterized protein from Methanocaldococcus jannaschii (strain ATCC 43067 / DSM 2661 / JAL-1 / JCM 10045 / NBRC 100440) (Methanococcus jannaschii).